The primary structure comprises 346 residues: T-box protein 12 (346 aa).

Positions 33-48 (DEEDVEVDVEDVDDVD) are enriched in acidic residues. Residues 33–66 (DEEDVEVDVEDVDDVDLSSIPSKSPERSRGRPKI) are disordered. The segment at residues 86–268 (LWAKFFDLGT…KNPFAKGFRD (183 aa)) is a DNA-binding region (T-box).

It is found in the nucleus. Functionally, transcription factor. Involved in cell fate determination; required to pattern the posterior hindgut. Involved in motor neuron fate determination and maintenance, acting as a transcriptional repressor to counteract gene activation by transcription factor unc-3 in a subset of motor neurons. Required throughout development to repress transcription by unc-3, probably acting by binding to specific promoter elements. Represses expression of VA and VB motor neuron-specific effector genes, such as DEG/ENaC channel del-1 and the innexin inx-12, in DA and DB motor neurons. Represses expression of transcription factor bnc-1, perhaps acting directly, in DA and DB motor neurons. This chain is T-box protein 12 (mab-9), found in Caenorhabditis elegans.